Reading from the N-terminus, the 273-residue chain is Formamidopyrimidine-DNA glycosylase (273 aa).

Residue proline 2 is the Schiff-base intermediate with DNA of the active site. Residue glutamate 3 is the Proton donor of the active site. Lysine 58 acts as the Proton donor; for beta-elimination activity in catalysis. DNA is bound by residues histidine 91, arginine 109, and arginine 154. An FPG-type zinc finger spans residues 239 to 273; that stretch reads FVYARTGEPCRICNAPVRQIVQGQRSTFYCPNCQK. Residue arginine 263 is the Proton donor; for delta-elimination activity of the active site.

Belongs to the FPG family. As to quaternary structure, monomer. Requires Zn(2+) as cofactor.

The catalysed reaction is Hydrolysis of DNA containing ring-opened 7-methylguanine residues, releasing 2,6-diamino-4-hydroxy-5-(N-methyl)formamidopyrimidine.. The enzyme catalyses 2'-deoxyribonucleotide-(2'-deoxyribose 5'-phosphate)-2'-deoxyribonucleotide-DNA = a 3'-end 2'-deoxyribonucleotide-(2,3-dehydro-2,3-deoxyribose 5'-phosphate)-DNA + a 5'-end 5'-phospho-2'-deoxyribonucleoside-DNA + H(+). In terms of biological role, involved in base excision repair of DNA damaged by oxidation or by mutagenic agents. Acts as a DNA glycosylase that recognizes and removes damaged bases. Has a preference for oxidized purines, such as 7,8-dihydro-8-oxoguanine (8-oxoG). Has AP (apurinic/apyrimidinic) lyase activity and introduces nicks in the DNA strand. Cleaves the DNA backbone by beta-delta elimination to generate a single-strand break at the site of the removed base with both 3'- and 5'-phosphates. The chain is Formamidopyrimidine-DNA glycosylase from Herminiimonas arsenicoxydans.